The primary structure comprises 519 residues: Cytochrome P450 88A1 (519 aa).

The chain crosses the membrane as a helical span at residues Met1 to Asp21. Cys466 contacts heme.

The protein belongs to the cytochrome P450 family. The cofactor is heme. In terms of tissue distribution, expressed in roots, developing leaves, the vegetative meristem, and suspension culture cells.

It localises to the membrane. It functions in the pathway plant hormone biosynthesis; gibberellin biosynthesis. This chain is Cytochrome P450 88A1 (CYP88A1), found in Zea mays (Maize).